A 3036-amino-acid chain; its full sequence is DmX-like protein 2 (3036 aa).

3 WD repeats span residues 108–145 (FLSS…ILEE), 167–207 (KTSV…KSSI), and 230–278 (AHPR…EDCL). Phosphoserine is present on S326. Residues 417–480 (KQVDHENDDA…EGSPRTYSRL (64 aa)) form a disordered region. Residues 422 to 434 (ENDDADREDEEHS) show a composition bias toward acidic residues. Residues 435–473 (QEDRERGLHMKLDHDLSLDRESEAGTGSSEHEDGEREGS) show a composition bias toward basic and acidic residues. At S473 the chain carries Phosphoserine. A WD 4 repeat occupies 492 to 532 (DRKIETLLTEWNKNPDMLFTIHPVDGTFLVWHVKYLDEYNP). Residue S588 is modified to Phosphoserine. 3 WD repeats span residues 595 to 634 (HSRS…KSAF), 751 to 803 (LHTS…RKLL), and 878 to 920 (QPSQ…VQAC). A disordered region spans residues 932–959 (SLLSVPGQKNVDSSPETSPSVSPMPHSS). Residues S944 and S945 each carry the phosphoserine modification. Positions 949-959 (SPSVSPMPHSS) are enriched in low complexity. The WD 8 repeat unit spans residues 1000 to 1037 (LSSSSIYPVCLAPYLVVTTCSDNKVRFWKCCMEANPEC). Residues S1140, S1143, and S1151 each carry the phosphoserine modification. WD repeat units lie at residues 1163-1204 (PNIK…VTEQ) and 1244-1281 (GTPS…VKFG). Phosphoserine is present on residues S1287 and S1400. A Phosphothreonine modification is found at T1417. Residue S1857 is modified to Phosphoserine. Basic and acidic residues predominate over residues 1927–1936 (ISHRMDDVPS). Residues 1927–1952 (ISHRMDDVPSHSKALSDGNGSSGIEW) are disordered. At S1984 the chain carries Phosphoserine. The segment at 1999–2033 (KSTDAREKDKQSDQKASDPNMLLTPQEEDDPEGDT) is disordered. The segment covering 2001–2014 (TDAREKDKQSDQKA) has biased composition (basic and acidic residues). At T2022 the chain carries Phosphothreonine. The segment covering 2024–2033 (QEEDDPEGDT) has biased composition (acidic residues). Positions 2122-2153 (GSYERHQIERRRLQAKREHAERRKSWLQKNQD) form a coiled coil. Phosphoserine is present on residues S2399 and S2640. WD repeat units lie at residues 2761 to 2800 (RNLH…QLVC), 2804 to 2843 (AGNA…SNPK), 2850 to 2892 (CHSK…GNSL), 2898 to 2937 (CHDH…LIHT), 2940 to 2979 (AHDS…LIHS), and 2992 to 3030 (NIGA…NIPN).

In terms of assembly, interacts with MADD and RAB3GAP.

Its subcellular location is the cytoplasmic vesicle. It localises to the secretory vesicle. The protein resides in the synaptic vesicle membrane. It is found in the neuronal dense core vesicle. In terms of biological role, may serve as a scaffold protein for MADD and RAB3GA on synaptic vesicles. Plays a role in the brain as a key controller of neuronal and endocrine homeostatic processes. This is DmX-like protein 2 (DMXL2) from Homo sapiens (Human).